We begin with the raw amino-acid sequence, 588 residues long: Polyphenol oxidase II, chloroplastic (588 aa).

A compositionally biased stretch (polar residues) spans 1–10; sequence MASFTTSPCT. The interval 1–32 is disordered; that stretch reads MASFTTSPCTSAAPKTPKSLSSSATISSPLPK. A chloroplast-targeting transit peptide spans 1–50; the sequence is MASFTTSPCTSAAPKTPKSLSSSATISSPLPKPSQIHIATAKRTHHFKVS. The segment covering 16-29 has biased composition (low complexity); that stretch reads TPKSLSSSATISSP. A thylakoid-targeting transit peptide spans 51 to 88; sequence CNAPNGDSQPKLDRRDVLLGLGGLAGAASLINNPLAFA. Cystine bridges form between C99-C116 and C115-C179. Residues H178, H199, H208, H330, H334, and H366 each coordinate Cu cation. The 2'-(S-cysteinyl)-histidine (Cys-His) cross-link spans 182–199; the sequence is CNGGYVQTDYPDKEIQVH.

Belongs to the tyrosinase family. As to quaternary structure, monomer. It depends on Cu(2+) as a cofactor.

It localises to the plastid. The protein resides in the chloroplast thylakoid lumen. The enzyme catalyses 2 catechol + O2 = 2 1,2-benzoquinone + 2 H2O. Catalyzes the oxidation of mono- and o-diphenols to o-diquinones. The sequence is that of Polyphenol oxidase II, chloroplastic (co-2) from Ipomoea batatas (Sweet potato).